The sequence spans 932 residues: Glycine dehydrogenase (decarboxylating) (932 aa).

Residue lysine 685 is modified to N6-(pyridoxal phosphate)lysine.

The protein belongs to the GcvP family. In terms of assembly, the glycine cleavage system is composed of four proteins: P, T, L and H. Requires pyridoxal 5'-phosphate as cofactor.

It carries out the reaction N(6)-[(R)-lipoyl]-L-lysyl-[glycine-cleavage complex H protein] + glycine + H(+) = N(6)-[(R)-S(8)-aminomethyldihydrolipoyl]-L-lysyl-[glycine-cleavage complex H protein] + CO2. In terms of biological role, the glycine cleavage system catalyzes the degradation of glycine. The P protein binds the alpha-amino group of glycine through its pyridoxal phosphate cofactor; CO(2) is released and the remaining methylamine moiety is then transferred to the lipoamide cofactor of the H protein. The sequence is that of Glycine dehydrogenase (decarboxylating) from Brucella canis (strain ATCC 23365 / NCTC 10854 / RM-666).